The chain runs to 483 residues: Xylulose kinase (483 aa).

77 to 78 (MH) is a substrate binding site. Aspartate 233 serves as the catalytic Proton acceptor.

It belongs to the FGGY kinase family.

The catalysed reaction is D-xylulose + ATP = D-xylulose 5-phosphate + ADP + H(+). In terms of biological role, catalyzes the phosphorylation of D-xylulose to D-xylulose 5-phosphate. In Klebsiella pneumoniae, this protein is Xylulose kinase.